Reading from the N-terminus, the 478-residue chain is Trigger factor (478 aa).

The tract at residues 1 to 41 (MAELADAPDLGSGARKGVRVRLPPPAPHKNGGKNESRGSGQ) is disordered. Positions 197–279 (GDMLVVEYEV…IKEIKKKVLP (83 aa)) constitute a PPIase FKBP-type domain. Basic and acidic residues predominate over residues 455–472 (VEQKQEEEKKEEKEEVKN). Positions 455-478 (VEQKQEEEKKEEKEEVKNESQGNT) are disordered.

Belongs to the FKBP-type PPIase family. Tig subfamily.

Its subcellular location is the cytoplasm. The enzyme catalyses [protein]-peptidylproline (omega=180) = [protein]-peptidylproline (omega=0). Its function is as follows. Involved in protein export. Acts as a chaperone by maintaining the newly synthesized protein in an open conformation. Functions as a peptidyl-prolyl cis-trans isomerase. The chain is Trigger factor from Aquifex aeolicus (strain VF5).